A 209-amino-acid polypeptide reads, in one-letter code: dTTP/UTP pyrophosphatase (209 aa).

The active-site Proton acceptor is the Asp-79.

This sequence belongs to the Maf family. YhdE subfamily. A divalent metal cation is required as a cofactor.

The protein resides in the cytoplasm. The catalysed reaction is dTTP + H2O = dTMP + diphosphate + H(+). The enzyme catalyses UTP + H2O = UMP + diphosphate + H(+). Nucleoside triphosphate pyrophosphatase that hydrolyzes dTTP and UTP. May have a dual role in cell division arrest and in preventing the incorporation of modified nucleotides into cellular nucleic acids. The protein is dTTP/UTP pyrophosphatase of Chelativorans sp. (strain BNC1).